The primary structure comprises 73 residues: MTTENDLLNRIAELETKVAFQEITLEELNQALIHHQLALDKLQTQMRHFAEKLKGAQVSNIASQAEETPPPHY.

It belongs to the SlyX family.

The protein is Protein SlyX homolog of Actinobacillus pleuropneumoniae serotype 5b (strain L20).